Consider the following 95-residue polypeptide: Citrate lyase acyl carrier protein (95 aa).

Position 14 is an O-(phosphoribosyl dephospho-coenzyme A)serine (Ser-14).

It belongs to the CitD family. In terms of assembly, oligomer with a subunit composition of (alpha,beta,gamma)6.

The protein localises to the cytoplasm. In terms of biological role, covalent carrier of the coenzyme of citrate lyase. This is Citrate lyase acyl carrier protein from Haemophilus influenzae (strain PittGG).